Here is a 314-residue protein sequence, read N- to C-terminus: Ribosomal RNA large subunit methyltransferase F (314 aa).

The protein belongs to the methyltransferase superfamily. METTL16/RlmF family.

It localises to the cytoplasm. It carries out the reaction adenosine(1618) in 23S rRNA + S-adenosyl-L-methionine = N(6)-methyladenosine(1618) in 23S rRNA + S-adenosyl-L-homocysteine + H(+). In terms of biological role, specifically methylates the adenine in position 1618 of 23S rRNA. This is Ribosomal RNA large subunit methyltransferase F from Flavobacterium psychrophilum (strain ATCC 49511 / DSM 21280 / CIP 103535 / JIP02/86).